Here is a 181-residue protein sequence, read N- to C-terminus: Cytochrome P450 monooxygenase dtpC (181 aa).

A heme-binding site is contributed by C125.

Belongs to the cytochrome P450 family. It depends on heme as a cofactor.

Its pathway is alkaloid biosynthesis. It functions in the pathway secondary metabolite biosynthesis. Cytochrome P450 monooxygenase; part of the gene cluster that mediates the biosynthesis of the dimeric diketopiperazine alkaloid ditryptophenaline. The nonribosomal peptide synthase dtpA accepts L-tryptophan and L-phenylalanine as its substrates and forms the phenylalanyl-tryptophanyl cyclic dipeptide product cyclophenylalanyltryptophenyl. The N-methyltransferase dtpB is responsible for the N-methylation of cyclophenylalanyltryptophenyl to yield cyclo-N-methylphenylalanyltryptophenyl. The cytochrome P450 monooxygenase is responsible not only for pyrroloindole ring formation but also for concurrent dimerization of N-methylphenylalanyltryptophanyl diketopiperazine monomers into a homodimeric product. The protein is Cytochrome P450 monooxygenase dtpC of Aspergillus flavus (strain ATCC 200026 / FGSC A1120 / IAM 13836 / NRRL 3357 / JCM 12722 / SRRC 167).